Reading from the N-terminus, the 323-residue chain is Sphingolipid delta(4)-desaturase/C4-monooxygenase DES2 (323 aa).

Glycine 2 carries the N-myristoyl glycine lipid modification. The next 2 membrane-spanning stretches (helical) occupy residues proline 41–valine 61 and tryptophan 68–isoleucine 88. The Histidine box-1 signature appears at histidine 89–histidine 93. The interval threonine 95–threonine 99 is required for C4-hydroxylase activity. The Histidine box-2 motif lies at histidine 128–histidine 132. The helical transmembrane segment at isoleucine 200–leucine 220 threads the bilayer. Residues histidine 259–histidine 263 carry the Histidine box-3 motif.

This sequence belongs to the fatty acid desaturase type 1 family. DEGS subfamily.

Its subcellular location is the endoplasmic reticulum membrane. It carries out the reaction a dihydroceramide + 2 Fe(II)-[cytochrome b5] + O2 + 2 H(+) = a phytoceramide + 2 Fe(III)-[cytochrome b5] + H2O. It catalyses the reaction an N-acylsphinganine + 2 Fe(II)-[cytochrome b5] + O2 + 2 H(+) = an N-acylsphing-4-enine + 2 Fe(III)-[cytochrome b5] + 2 H2O. The catalysed reaction is N-octanoylsphinganine + 2 Fe(II)-[cytochrome b5] + O2 + 2 H(+) = N-octanoyl-4-hydroxysphinganine + 2 Fe(III)-[cytochrome b5] + H2O. The enzyme catalyses an N-acylsphinganine + 2 Fe(II)-[cytochrome b5] + O2 + 2 H(+) = an N-acyl-(4R)-4-hydroxysphinganine + 2 Fe(III)-[cytochrome b5] + H2O. Its pathway is membrane lipid metabolism; sphingolipid biosynthesis. In terms of biological role, bifunctional enzyme which acts both as a sphingolipid delta(4)-desaturase and a sphingolipid C4-monooxygenase. The sequence is that of Sphingolipid delta(4)-desaturase/C4-monooxygenase DES2 from Rattus norvegicus (Rat).